The primary structure comprises 274 residues: Diaminopimelate epimerase (274 aa).

Substrate contacts are provided by Asn-11, Gln-44, and Asn-64. Cys-73 functions as the Proton donor in the catalytic mechanism. Residues 74 to 75, Asn-157, Asn-190, and 208 to 209 contribute to the substrate site; these read GN and ER. Residue Cys-217 is the Proton acceptor of the active site. 218-219 contacts substrate; sequence GS.

Belongs to the diaminopimelate epimerase family. As to quaternary structure, homodimer.

The protein resides in the cytoplasm. It catalyses the reaction (2S,6S)-2,6-diaminopimelate = meso-2,6-diaminopimelate. It participates in amino-acid biosynthesis; L-lysine biosynthesis via DAP pathway; DL-2,6-diaminopimelate from LL-2,6-diaminopimelate: step 1/1. Catalyzes the stereoinversion of LL-2,6-diaminopimelate (L,L-DAP) to meso-diaminopimelate (meso-DAP), a precursor of L-lysine and an essential component of the bacterial peptidoglycan. This chain is Diaminopimelate epimerase, found in Escherichia coli O81 (strain ED1a).